Consider the following 616-residue polypeptide: MSSQKKVSSGNTTPSGLAGLASPLNDQQINLLQQISDLSPQQLAWVSGYFWGLSQSAAPSAVTPIAQAVSAVAAKPAGKLTIIFASQTGNAKGVAEALEQEAKAEGIAVQLFDASDYKGKNLANETHVIIVASTNGEGEAPDNAIELHEFLQSKKAPKLPNLQYGVIGLGDSSYEFFCQTGKDFDSYLAKLGATPFIERVDCDVDYDASAAQWRKQALEKVKDALSAGVEADVVQLPVAQLAAGHALYTKQKPYAATLLTSQKITGRDSGKDVRHVEIDLAGSGITYQPGDALGVWFENSGELANQVLAKVGLSGVESVDVDGESLSIHSALVSKFEITSSNPQQVEKFAQLSGSKKLLKLVEEKDKLREYAGNTQLVDLLAEKQTKLTAEELVGLLRRLTPRLYSIASSQTEVDEEVHLTVGLVEYDVKGEKRFGGASGYLAQRLEEGEQVKVFVENNNNFKLPADDNVPVIMVGPGTGIAPFRSFIQERDNRGAEGKNWLFFGDRTFTQDFLYQVEWQKYLKSGLLTKLDVAFSRDQAEKVYVQQRILENAAQVWQWIQEGAYLYVCGDANRMAKDVHQAFVAVAEQEGKMSRDDAEEFINDLRKAKRYQRDVY.

The region spanning 80–218 (LTIIFASQTG…SAAQWRKQAL (139 aa)) is the Flavodoxin-like domain. Residues 86–91 (SQTGNA), 133–136 (STNG), and 169–178 (LGDSSYEFFC) contribute to the FMN site. Residues 251-465 (QKPYAATLLT…VENNNNFKLP (215 aa)) enclose the FAD-binding FR-type domain. FAD is bound by residues T339, G373, 403-406 (RLYS), 421-423 (TVG), Y427, and 436-439 (GGAS). NADP(+) is bound by residues 536–537 (SR), 542–546 (KVYVQ), and D578. Position 616 (Y616) interacts with FAD.

It belongs to the NADPH-dependent sulphite reductase flavoprotein subunit CysJ family. In the N-terminal section; belongs to the flavodoxin family. This sequence in the C-terminal section; belongs to the flavoprotein pyridine nucleotide cytochrome reductase family. In terms of assembly, alpha(8)-beta(8). The alpha component is a flavoprotein, the beta component is a hemoprotein. FAD is required as a cofactor. Requires FMN as cofactor.

It catalyses the reaction hydrogen sulfide + 3 NADP(+) + 3 H2O = sulfite + 3 NADPH + 4 H(+). The protein operates within sulfur metabolism; hydrogen sulfide biosynthesis; hydrogen sulfide from sulfite (NADPH route): step 1/1. In terms of biological role, component of the sulfite reductase complex that catalyzes the 6-electron reduction of sulfite to sulfide. This is one of several activities required for the biosynthesis of L-cysteine from sulfate. The flavoprotein component catalyzes the electron flow from NADPH -&gt; FAD -&gt; FMN to the hemoprotein component. The sequence is that of Sulfite reductase [NADPH] flavoprotein alpha-component from Vibrio vulnificus (strain CMCP6).